A 265-amino-acid polypeptide reads, in one-letter code: Small ribosomal subunit protein eS4 (265 aa).

In terms of domain architecture, S4 RNA-binding spans 42–104 (LPLILIIRNR…TGENYRLLYD (63 aa)).

It belongs to the eukaryotic ribosomal protein eS4 family.

It localises to the cytoplasm. The polypeptide is Small ribosomal subunit protein eS4 (RPS4) (Oryza sativa subsp. japonica (Rice)).